A 119-amino-acid chain; its full sequence is Small ribosomal subunit protein bS6 (119 aa).

The interval 99-119 is disordered; it reads KKEKKQSRKEEGSENSEKVEE.

The protein belongs to the bacterial ribosomal protein bS6 family.

Binds together with bS18 to 16S ribosomal RNA. The sequence is that of Small ribosomal subunit protein bS6 from Thermosipho melanesiensis (strain DSM 12029 / CIP 104789 / BI429).